The following is a 122-amino-acid chain: Large ribosomal subunit protein uL14 (122 aa).

It belongs to the universal ribosomal protein uL14 family. Part of the 50S ribosomal subunit. Forms a cluster with proteins L3 and L19. In the 70S ribosome, L14 and L19 interact and together make contacts with the 16S rRNA in bridges B5 and B8.

Functionally, binds to 23S rRNA. Forms part of two intersubunit bridges in the 70S ribosome. This is Large ribosomal subunit protein uL14 from Thermus aquaticus.